Reading from the N-terminus, the 842-residue chain is Protein P (842 aa).

A terminal protein domain (TP) region spans residues methionine 1–glutamine 177. Positions glutamate 178–leucine 346 are spacer. The disordered stretch occupies residues leucine 218–serine 274. Residues glutamate 347–arginine 690 form a polymerase/reverse transcriptase domain (RT) region. A Reverse transcriptase domain is found at glutamate 357 to isoleucine 600. Positions 429, 551, and 552 each coordinate Mg(2+).

The protein belongs to the hepadnaviridae P protein family.

It catalyses the reaction DNA(n) + a 2'-deoxyribonucleoside 5'-triphosphate = DNA(n+1) + diphosphate. The enzyme catalyses Endonucleolytic cleavage to 5'-phosphomonoester.. Activated by host HSP70 and HSP40 in vitro to be able to bind the epsilon loop of the pgRNA. Because deletion of the RNase H region renders the protein partly chaperone-independent, the chaperones may be needed indirectly to relieve occlusion of the RNA-binding site by this domain. Inhibited by several reverse-transcriptase inhibitors: Lamivudine, Adefovir and Entecavir. Functionally, multifunctional enzyme that converts the viral RNA genome into dsDNA in viral cytoplasmic capsids. This enzyme displays a DNA polymerase activity that can copy either DNA or RNA templates, and a ribonuclease H (RNase H) activity that cleaves the RNA strand of RNA-DNA heteroduplexes in a partially processive 3'- to 5'-endonucleasic mode. Neo-synthesized pregenomic RNA (pgRNA) are encapsidated together with the P protein, and reverse-transcribed inside the nucleocapsid. Initiation of reverse-transcription occurs first by binding the epsilon loop on the pgRNA genome, and is initiated by protein priming, thereby the 5'-end of (-)DNA is covalently linked to P protein. Partial (+)DNA is synthesized from the (-)DNA template and generates the relaxed circular DNA (RC-DNA) genome. After budding and infection, the RC-DNA migrates in the nucleus, and is converted into a plasmid-like covalently closed circular DNA (cccDNA). The activity of P protein does not seem to be necessary for cccDNA generation, and is presumably released from (+)DNA by host nuclear DNA repair machinery. The polypeptide is Protein P (Hepatitis B virus genotype C subtype adr (isolate Korea/Kim/1989) (HBV-C)).